Consider the following 95-residue polypeptide: MAYGKAHLEAQLKRALAEEIQALEDPRLFLLTVEAVRLSKDGSVLSVYVEAFREEEGALRALSRAERRLVAALARRVRMRRLPRLEFLPWRASPA.

The protein belongs to the RbfA family. As to quaternary structure, interacts with the 30S ribosomal subunit as a monomer, binding in a position overlapping the sites of the A and P site tRNAs, and displacing segments of the 16S rRNA. Probably contacts 16S rRNA and ribosomal protein S9 and S13.

Its subcellular location is the cytoplasm. In terms of biological role, one of several proteins that assist in the late maturation steps of the functional core of the 30S ribosomal subunit. Associates with free 30S ribosomal subunits (but not with 30S subunits that are part of 70S ribosomes or polysomes). Required for efficient processing of 16S rRNA. Probably interacts with the 5'-terminal helix region of 16S rRNA, bringing together different domains of the 30S ribosomal subunit which aids assembly. This chain is Ribosome-binding factor A, found in Thermus thermophilus (strain ATCC 27634 / DSM 579 / HB8).